The chain runs to 622 residues: Chaperone protein HscA homolog (622 aa).

This sequence belongs to the heat shock protein 70 family.

In terms of biological role, chaperone involved in the maturation of iron-sulfur cluster-containing proteins. Has a low intrinsic ATPase activity which is markedly stimulated by HscB. This chain is Chaperone protein HscA homolog, found in Delftia acidovorans (strain DSM 14801 / SPH-1).